A 217-amino-acid polypeptide reads, in one-letter code: tRNA (guanine-N(7)-)-methyltransferase (217 aa).

S-adenosyl-L-methionine-binding residues include glutamate 44, glutamate 69, aspartate 96, and aspartate 118. Aspartate 118 is a catalytic residue. Residues lysine 122, aspartate 154, and threonine 191–glutamate 194 each bind substrate.

Belongs to the class I-like SAM-binding methyltransferase superfamily. TrmB family.

It catalyses the reaction guanosine(46) in tRNA + S-adenosyl-L-methionine = N(7)-methylguanosine(46) in tRNA + S-adenosyl-L-homocysteine. The protein operates within tRNA modification; N(7)-methylguanine-tRNA biosynthesis. Functionally, catalyzes the formation of N(7)-methylguanine at position 46 (m7G46) in tRNA. The sequence is that of tRNA (guanine-N(7)-)-methyltransferase from Bacillus cytotoxicus (strain DSM 22905 / CIP 110041 / 391-98 / NVH 391-98).